A 201-amino-acid polypeptide reads, in one-letter code: Recombination protein RecR (201 aa).

The segment at 60 to 75 (CTSCGNVDTSDPCTIC) adopts a C4-type zinc-finger fold. The region spanning 83 to 178 (TTLVVVEDVS…KVTRLAHGVP (96 aa)) is the Toprim domain.

Belongs to the RecR family.

May play a role in DNA repair. It seems to be involved in an RecBC-independent recombinational process of DNA repair. It may act with RecF and RecO. The sequence is that of Recombination protein RecR from Methylobacterium radiotolerans (strain ATCC 27329 / DSM 1819 / JCM 2831 / NBRC 15690 / NCIMB 10815 / 0-1).